The primary structure comprises 319 residues: Acetylglutamate kinase (319 aa).

Residues 74-75, R96, and N210 each bind substrate; that span reads GG.

It belongs to the acetylglutamate kinase family. ArgB subfamily.

The protein resides in the cytoplasm. The catalysed reaction is N-acetyl-L-glutamate + ATP = N-acetyl-L-glutamyl 5-phosphate + ADP. It participates in amino-acid biosynthesis; L-arginine biosynthesis; N(2)-acetyl-L-ornithine from L-glutamate: step 2/4. Catalyzes the ATP-dependent phosphorylation of N-acetyl-L-glutamate. The sequence is that of Acetylglutamate kinase from Pseudarthrobacter chlorophenolicus (strain ATCC 700700 / DSM 12829 / CIP 107037 / JCM 12360 / KCTC 9906 / NCIMB 13794 / A6) (Arthrobacter chlorophenolicus).